We begin with the raw amino-acid sequence, 123 residues long: Small ribosomal subunit protein uS12 (123 aa).

D89 carries the post-translational modification 3-methylthioaspartic acid. A disordered region spans residues 104 to 123 (TAGVKDRKQARSKYGAKRPK). The span at 113-123 (ARSKYGAKRPK) shows a compositional bias: basic residues.

This sequence belongs to the universal ribosomal protein uS12 family. As to quaternary structure, part of the 30S ribosomal subunit. Contacts proteins S8 and S17. May interact with IF1 in the 30S initiation complex.

In terms of biological role, with S4 and S5 plays an important role in translational accuracy. Functionally, interacts with and stabilizes bases of the 16S rRNA that are involved in tRNA selection in the A site and with the mRNA backbone. Located at the interface of the 30S and 50S subunits, it traverses the body of the 30S subunit contacting proteins on the other side and probably holding the rRNA structure together. The combined cluster of proteins S8, S12 and S17 appears to hold together the shoulder and platform of the 30S subunit. The protein is Small ribosomal subunit protein uS12 of Chromobacterium violaceum (strain ATCC 12472 / DSM 30191 / JCM 1249 / CCUG 213 / NBRC 12614 / NCIMB 9131 / NCTC 9757 / MK).